A 92-amino-acid chain; its full sequence is Small ribosomal subunit protein uS19 (92 aa).

Residues 1-27 (MARSIKKGPFADDHLKKKVEAQSGSEK) are disordered. Basic and acidic residues predominate over residues 9 to 27 (PFADDHLKKKVEAQSGSEK).

The protein belongs to the universal ribosomal protein uS19 family.

Its function is as follows. Protein S19 forms a complex with S13 that binds strongly to the 16S ribosomal RNA. The protein is Small ribosomal subunit protein uS19 of Staphylococcus saprophyticus subsp. saprophyticus (strain ATCC 15305 / DSM 20229 / NCIMB 8711 / NCTC 7292 / S-41).